The sequence spans 450 residues: uncharacterized protein (450 aa).

K283 is subject to N6-(pyridoxal phosphate)lysine.

Belongs to the class-III pyridoxal-phosphate-dependent aminotransferase family. Pyridoxal 5'-phosphate serves as cofactor.

In terms of biological role, essential for glycerol catabolism. This is an uncharacterized protein from Bacillus subtilis (strain 168).